The following is a 319-amino-acid chain: Putative G-protein coupled receptor B0244.7 (319 aa).

N-linked (GlcNAc...) asparagine glycosylation is present at asparagine 28. A run of 6 helical transmembrane segments spans residues 49-69 (AIFI…IYIF), 107-127 (LPVI…FIIF), 131-151 (SFLS…IAVV), 166-186 (VLLI…CGIV), 206-226 (GPVL…CLVI), and 261-281 (LFAG…SAII).

The protein belongs to the G-protein coupled receptor 1 family. B0244 subfamily.

The protein localises to the cell membrane. The sequence is that of Putative G-protein coupled receptor B0244.7 from Caenorhabditis elegans.